Consider the following 492-residue polypeptide: Phytoene desaturase (lycopene-forming) (492 aa).

5-38 (VVIGAGFGGLALAIRLQAAGIPTVLLEQRDKPGG) contributes to the FAD binding site.

This sequence belongs to the carotenoid/retinoid oxidoreductase family. FAD serves as cofactor.

It catalyses the reaction 15-cis-phytoene + 4 A = all-trans-lycopene + 4 AH2. The protein operates within carotenoid biosynthesis; lycopene biosynthesis. Functionally, this enzyme converts phytoene into lycopene via the intermediaries of phytofluene, zeta-carotene and neurosporene by the introduction of four double bonds. This chain is Phytoene desaturase (lycopene-forming) (crtI), found in Pseudescherichia vulneris (Escherichia vulneris).